We begin with the raw amino-acid sequence, 528 residues long: MAVAQADPGSDPAGGARFFCTAGRGLEPFLMREVRARLEATQVEYISGKVFFTTCSDLPSMKKLKSAERLFVLIKKQLPIAVSSLHKGKILNEMQRFVNDDPGSWLEAISLWKKLLEHDPKREKVSQRDANPLKRKAGENETIIAKKLKVEEKQEVAKDHGESQEDKLLQGSPEQGEAVTRTELQDHRLNSTTEKAADAQDQEDLTFRVSCRCTGNVRKVITGQEAGRVIGLALMRQFGWKADLRNPNIEIFMHLSDAYSVVGIPLLRMPLASRTYIQTAGLRSTIAWAMASIAEIKAGALVLDPMCGLGTILVEAAEEWPDVFYMGADMSDAQLLGACDNLKAAGLTDRIELLKSSVTDLPLPSQSTDVIISDIPFGKKFKLGKDIKSILQEMERVLRVGGAMVLLLSEDHHRHLTDCGGSSIPLTSKGHIAEPEMKTLSNPDRTGAPDTASPSQRASSVQCLGRMRPCGSLVPVESFKVSLGKTDAFICKYKKAQASGLSSAECHEPGAHTEMAAMQESPSLQDSL.

The span at 154–168 (QEVAKDHGESQEDKL) shows a compositional bias: basic and acidic residues. 2 disordered regions span residues 154–200 (QEVA…ADAQ) and 437–460 (MKTL…RASS). Residues 162-266 (ESQEDKLLQG…DAYSVVGIPL (105 aa)) enclose the THUMP domain.

This sequence belongs to the methyltransferase superfamily. In terms of assembly, part of the heterodimeric THUMPD2-TRM112 methyltransferase complex; this complex forms an active tRNA methyltransferase, where TRMT112 acts as an activator of the catalytic subunit THUMPD2.

It localises to the nucleus. The enzyme catalyses guanosine in U6 snRNA + S-adenosyl-L-methionine = N(2)-methylguanosine in U6 snRNA + S-adenosyl-L-homocysteine + H(+). Its function is as follows. Catalytic subunit of the THUMPD2-TRM112 methyltransferase complex, that specifically mediates the S-adenosyl-L-methionine-dependent N(2)-methylation of guanosine nucleotides, most probably at position 72 (m2G72), in the U6snRNA of the major spliceosome. This modification in the U6 snRNA affects the constitutive splicing efficiency of introns that have suboptimal splice sites and can impact final mRNA levels. The chain is U6 snRNA (guanine-N(2))-methyltransferase THUMPD2 from Mus musculus (Mouse).